The sequence spans 481 residues: GDP-fucose protein O-fucosyltransferase 3 (481 aa).

The Cytoplasmic segment spans residues 1–8; sequence MVRFQRRK. A helical; Signal-anchor for type II membrane protein membrane pass occupies residues 9–31; the sequence is LLASCLCVTATVFLMVTLQVVVE. Residues 32–481 are Lumenal-facing; sequence LGKFERKKLK…EEFWALVFKD (450 aa). Asn-110, Asn-168, and Asn-318 each carry an N-linked (GlcNAc...) asparagine glycan. Cys-389 and Cys-392 are oxidised to a cystine. The N-linked (GlcNAc...) asparagine glycan is linked to Asn-468.

It belongs to the glycosyltransferase 10 family. Widely expressed, with a higher expression in liver and thymus.

The protein localises to the endoplasmic reticulum membrane. It carries out the reaction L-threonyl-[protein] + GDP-beta-L-fucose = 3-O-(alpha-L-fucosyl)-L-threonyl-[protein] + GDP + H(+). The enzyme catalyses L-seryl-[protein] + GDP-beta-L-fucose = 3-O-(alpha-L-fucosyl)-L-seryl-[protein] + GDP + H(+). It participates in protein modification; protein glycosylation. In terms of biological role, protein O-fucosyltransferase that specifically catalyzes O-fucosylation of serine or threonine residues in EMI domains of target proteins, such as MMRN1, MMRN2 and EMID1. Attaches fucose through an O-glycosidic linkage. O-fucosylation of EMI domain-containing proteins may be required for facilitating protein folding and secretion. May also show alpha-(1,3)-fucosyltransferase activity toward the innermost N-acetyl glucosamine (GlcNAc) residue in biantennary N-glycan acceptors. However, this was tested with a library of synthetic substrates and this activity is unsure in vivo. May be involved in biosynthesis of Lewis X-carrying biantennary N-glycans that regulate neuron stem cell self-renewal during brain development. In Mus musculus (Mouse), this protein is GDP-fucose protein O-fucosyltransferase 3.